Here is a 189-residue protein sequence, read N- to C-terminus: Probable nicotinate-nucleotide adenylyltransferase (189 aa).

The protein belongs to the NadD family.

The catalysed reaction is nicotinate beta-D-ribonucleotide + ATP + H(+) = deamido-NAD(+) + diphosphate. It functions in the pathway cofactor biosynthesis; NAD(+) biosynthesis; deamido-NAD(+) from nicotinate D-ribonucleotide: step 1/1. Catalyzes the reversible adenylation of nicotinate mononucleotide (NaMN) to nicotinic acid adenine dinucleotide (NaAD). The chain is Probable nicotinate-nucleotide adenylyltransferase from Cereibacter sphaeroides (strain ATCC 17023 / DSM 158 / JCM 6121 / CCUG 31486 / LMG 2827 / NBRC 12203 / NCIMB 8253 / ATH 2.4.1.) (Rhodobacter sphaeroides).